Reading from the N-terminus, the 302-residue chain is Sodium/potassium-transporting ATPase subunit beta-233 (302 aa).

At 1–30 (MSGNKDSDGGWKTFIWNSEKKELLGRTGCS) the chain is on the cytoplasmic side. Residues 31–51 (WFKILLFYVIFYGCLAAVFVG) traverse the membrane as a helical; Signal-anchor for type II membrane protein segment. Topologically, residues 52 to 302 (TIQALLLTLS…FDIKITVNDS (251 aa)) are extracellular. 2 disulfides stabilise this stretch: C125–C148 and C158–C174. Residues N193 and N263 are each glycosylated (N-linked (GlcNAc...) asparagine). The cysteines at positions 213 and 274 are disulfide-linked.

The protein belongs to the X(+)/potassium ATPases subunit beta family. As to quaternary structure, the sodium/potassium-transporting ATPase is composed of a catalytic alpha subunit, an auxiliary non-catalytic beta subunit and an additional regulatory subunit. Post-translationally, glycosylated. In terms of tissue distribution, expressed mainly in epithelial tissues.

It is found in the cell membrane. In terms of biological role, this is the non-catalytic component of the active enzyme, which catalyzes the hydrolysis of ATP coupled with the exchange of Na(+) and K(+) ions across the plasma membrane. The beta subunit regulates, through assembly of alpha/beta heterodimers, the number of sodium pumps transported to the plasma membrane. The chain is Sodium/potassium-transporting ATPase subunit beta-233 from Anguilla anguilla (European freshwater eel).